The chain runs to 575 residues: Chaperonin CPN60-2, mitochondrial (575 aa).

The transit peptide at 1 to 32 (MHRFASGLASKARLARKGANQIASRSSWSRNY) directs the protein to the mitochondrion.

It belongs to the chaperonin (HSP60) family.

The protein resides in the mitochondrion. In terms of biological role, implicated in mitochondrial protein import and macromolecular assembly. May facilitate the correct folding of imported proteins. May also prevent misfolding and promote the refolding and proper assembly of unfolded polypeptides generated under stress conditions in the mitochondrial matrix. This is Chaperonin CPN60-2, mitochondrial (CPN60-2) from Cucurbita maxima (Pumpkin).